The chain runs to 567 residues: Dihydroxy-acid dehydratase (567 aa).

Cys52 is a binding site for [2Fe-2S] cluster. Asp84 lines the Mg(2+) pocket. Cys125 is a [2Fe-2S] cluster binding site. Positions 126 and 127 each coordinate Mg(2+). Position 127 is an N6-carboxylysine (Lys127). Position 197 (Cys197) interacts with [2Fe-2S] cluster. Glu448 contributes to the Mg(2+) binding site. The active-site Proton acceptor is Ser474.

Belongs to the IlvD/Edd family. In terms of assembly, homodimer. [2Fe-2S] cluster is required as a cofactor. It depends on Mg(2+) as a cofactor.

It catalyses the reaction (2R)-2,3-dihydroxy-3-methylbutanoate = 3-methyl-2-oxobutanoate + H2O. The enzyme catalyses (2R,3R)-2,3-dihydroxy-3-methylpentanoate = (S)-3-methyl-2-oxopentanoate + H2O. It functions in the pathway amino-acid biosynthesis; L-isoleucine biosynthesis; L-isoleucine from 2-oxobutanoate: step 3/4. It participates in amino-acid biosynthesis; L-valine biosynthesis; L-valine from pyruvate: step 3/4. Functionally, functions in the biosynthesis of branched-chain amino acids. Catalyzes the dehydration of (2R,3R)-2,3-dihydroxy-3-methylpentanoate (2,3-dihydroxy-3-methylvalerate) into 2-oxo-3-methylpentanoate (2-oxo-3-methylvalerate) and of (2R)-2,3-dihydroxy-3-methylbutanoate (2,3-dihydroxyisovalerate) into 2-oxo-3-methylbutanoate (2-oxoisovalerate), the penultimate precursor to L-isoleucine and L-valine, respectively. This Streptococcus pneumoniae (strain CGSP14) protein is Dihydroxy-acid dehydratase.